The sequence spans 405 residues: Polyadenylate-binding protein RBP45B (405 aa).

Over residues 1 to 19 the composition is skewed to pro residues; the sequence is MMQQPPPGGILPHHAPPPS. The interval 1 to 54 is disordered; that stretch reads MMQQPPPGGILPHHAPPPSAQQQYGYQQPYGIAGAAPPPPQMWNPQAAAPPSVQ. Over residues 20–35 the composition is skewed to low complexity; that stretch reads AQQQYGYQQPYGIAGA. 3 RRM domains span residues 62–143, 155–234, and 261–333; these read RTLW…WASL, YTIF…PAAS, and TTVF…WGRS. Positions 379-405 are disordered; that stretch reads GGYQQTPQAGQQPPQQPPQQQQVGFSY. A compositionally biased stretch (low complexity) spans 380-405; that stretch reads GYQQTPQAGQQPPQQPPQQQQVGFSY.

Belongs to the polyadenylate-binding RBP45 family. As to quaternary structure, both isoform 1 and isoform 2 interact with poly(A)+ RNA in nucleus. As to expression, expressed in roots, leaves, stems, flowers, siliques, and seedlings. Present in immature anther tissues (tapetum cells) and mature pollen grains.

The protein localises to the nucleus. Functionally, heterogeneous nuclear ribonucleoprotein (hnRNP)-protein binding the poly(A) tail of mRNA and probably involved in some steps of pre-mRNA maturation. This chain is Polyadenylate-binding protein RBP45B (RBP45B), found in Arabidopsis thaliana (Mouse-ear cress).